A 107-amino-acid polypeptide reads, in one-letter code: Iron-sulfur cluster assembly protein CyaY (107 aa).

It belongs to the frataxin family.

Involved in iron-sulfur (Fe-S) cluster assembly. May act as a regulator of Fe-S biogenesis. This Neisseria gonorrhoeae (strain ATCC 700825 / FA 1090) protein is Iron-sulfur cluster assembly protein CyaY.